We begin with the raw amino-acid sequence, 196 residues long: 3-isopropylmalate dehydratase small subunit (196 aa).

This sequence belongs to the LeuD family. LeuD type 1 subfamily. In terms of assembly, heterodimer of LeuC and LeuD.

The catalysed reaction is (2R,3S)-3-isopropylmalate = (2S)-2-isopropylmalate. The protein operates within amino-acid biosynthesis; L-leucine biosynthesis; L-leucine from 3-methyl-2-oxobutanoate: step 2/4. In terms of biological role, catalyzes the isomerization between 2-isopropylmalate and 3-isopropylmalate, via the formation of 2-isopropylmaleate. This Streptococcus thermophilus (strain CNRZ 1066) protein is 3-isopropylmalate dehydratase small subunit.